The sequence spans 224 residues: Magnesium-protoporphyrin O-methyltransferase (224 aa).

It belongs to the class I-like SAM-binding methyltransferase superfamily. Magnesium protoporphyrin O-methyltransferase family.

The enzyme catalyses Mg-protoporphyrin IX + S-adenosyl-L-methionine = Mg-protoporphyrin IX 13-monomethyl ester + S-adenosyl-L-homocysteine. Its pathway is porphyrin-containing compound metabolism; bacteriochlorophyll biosynthesis (light-independent). In terms of biological role, converts Mg-protoporphyrin IX to Mg-protoporphyrin IX methylester using S-adenosyl-L-methionine as a cofactor. The sequence is that of Magnesium-protoporphyrin O-methyltransferase (bchM) from Rhodobacter capsulatus (Rhodopseudomonas capsulata).